Consider the following 295-residue polypeptide: Tyrosine recombinase XerD (295 aa).

Residues 1–85 (MDTIIEEYLK…TIRSFHQFAL (85 aa)) form the Core-binding (CB) domain. The region spanning 106-289 (KLPDVLEINE…SKSQIRKMYN (184 aa)) is the Tyr recombinase domain. Catalysis depends on residues arginine 146, lysine 170, histidine 241, arginine 244, and histidine 267. The active-site O-(3'-phospho-DNA)-tyrosine intermediate is tyrosine 276.

It belongs to the 'phage' integrase family. XerD subfamily. Forms a cyclic heterotetrameric complex composed of two molecules of XerC and two molecules of XerD.

Its subcellular location is the cytoplasm. Site-specific tyrosine recombinase, which acts by catalyzing the cutting and rejoining of the recombining DNA molecules. The XerC-XerD complex is essential to convert dimers of the bacterial chromosome into monomers to permit their segregation at cell division. It also contributes to the segregational stability of plasmids. This is Tyrosine recombinase XerD from Staphylococcus saprophyticus subsp. saprophyticus (strain ATCC 15305 / DSM 20229 / NCIMB 8711 / NCTC 7292 / S-41).